The sequence spans 177 residues: MRLAKEVEAALDLLIIFLAQATYVSVNTVRWIILVKGRRLLASAISFFEVILWVYALGLVVSQLSDPVKVATYALGYAVGALVGSKIEERLALGYVLFQVITTRIGELAPALREHGLGVTDWRAEGRMGQREVLMVVARRKNGPQVVRLLEELDPQAFVVQLDASWYRGGFIQKMLQ.

Transmembrane regions (helical) follow at residues 9 to 29 and 41 to 61; these read AALDLLIIFLAQATYVSVNTV and LASAISFFEVILWVYALGLVV.

This sequence belongs to the UPF0316 family.

The protein resides in the cell membrane. This is UPF0316 protein STH2077 from Symbiobacterium thermophilum (strain DSM 24528 / JCM 14929 / IAM 14863 / T).